The following is a 909-amino-acid chain: DNA mismatch repair protein MutS (909 aa).

The span at 275–290 (QKAERPPLSRPEREEQ) shows a compositional bias: basic and acidic residues. A disordered region spans residues 275 to 295 (QKAERPPLSRPEREEQGSTLF). 661–668 (GPNMGGKS) serves as a coordination point for ATP.

The protein belongs to the DNA mismatch repair MutS family.

In terms of biological role, this protein is involved in the repair of mismatches in DNA. It is possible that it carries out the mismatch recognition step. This protein has a weak ATPase activity. This Mesorhizobium japonicum (strain LMG 29417 / CECT 9101 / MAFF 303099) (Mesorhizobium loti (strain MAFF 303099)) protein is DNA mismatch repair protein MutS.